The following is a 593-amino-acid chain: Probable translation initiation factor IF-2 (593 aa).

A tr-type G domain is found at 7 to 221; sequence IRTPIVCVMG…VLIGLAQRYM (215 aa). The interval 16–23 is G1; it reads GHVDHGKT. GTP is bound at residue 16-23; sequence GHVDHGKT. The G2 stretch occupies residues 41–45; the sequence is EITQH. The interval 77 to 80 is G3; the sequence is DTPG. GTP is bound by residues 77–81 and 131–134; these read DTPGH and NKVD. A G4 region spans residues 131-134; the sequence is NKVD. Residues 199 to 201 form a G5 region; the sequence is SAL.

This sequence belongs to the TRAFAC class translation factor GTPase superfamily. Classic translation factor GTPase family. IF-2 subfamily.

Its function is as follows. Function in general translation initiation by promoting the binding of the formylmethionine-tRNA to ribosomes. Seems to function along with eIF-2. The polypeptide is Probable translation initiation factor IF-2 (Methanoculleus marisnigri (strain ATCC 35101 / DSM 1498 / JR1)).